Reading from the N-terminus, the 165-residue chain is Ureidoglycolate lyase (165 aa).

This sequence belongs to the ureidoglycolate lyase family. Homodimer. The cofactor is Ni(2+).

It carries out the reaction (S)-ureidoglycolate = urea + glyoxylate. It functions in the pathway nitrogen metabolism; (S)-allantoin degradation. Catalyzes the catabolism of the allantoin degradation intermediate (S)-ureidoglycolate, generating urea and glyoxylate. Involved in the utilization of allantoin as nitrogen source. The polypeptide is Ureidoglycolate lyase (Chelativorans sp. (strain BNC1)).